Consider the following 367-residue polypeptide: Aminomethyltransferase (367 aa).

It belongs to the GcvT family. As to quaternary structure, the glycine cleavage system is composed of four proteins: P, T, L and H.

It carries out the reaction N(6)-[(R)-S(8)-aminomethyldihydrolipoyl]-L-lysyl-[protein] + (6S)-5,6,7,8-tetrahydrofolate = N(6)-[(R)-dihydrolipoyl]-L-lysyl-[protein] + (6R)-5,10-methylene-5,6,7,8-tetrahydrofolate + NH4(+). In terms of biological role, the glycine cleavage system catalyzes the degradation of glycine. The polypeptide is Aminomethyltransferase (Mycobacterium avium (strain 104)).